Consider the following 247-residue polypeptide: 1-(5-phosphoribosyl)-5-[(5-phosphoribosylamino)methylideneamino] imidazole-4-carboxamide isomerase (247 aa).

Catalysis depends on Asp8, which acts as the Proton acceptor. The active-site Proton donor is the Asp131.

This sequence belongs to the HisA/HisF family.

The protein localises to the cytoplasm. The enzyme catalyses 1-(5-phospho-beta-D-ribosyl)-5-[(5-phospho-beta-D-ribosylamino)methylideneamino]imidazole-4-carboxamide = 5-[(5-phospho-1-deoxy-D-ribulos-1-ylimino)methylamino]-1-(5-phospho-beta-D-ribosyl)imidazole-4-carboxamide. It functions in the pathway amino-acid biosynthesis; L-histidine biosynthesis; L-histidine from 5-phospho-alpha-D-ribose 1-diphosphate: step 4/9. The protein is 1-(5-phosphoribosyl)-5-[(5-phosphoribosylamino)methylideneamino] imidazole-4-carboxamide isomerase of Cupriavidus metallidurans (strain ATCC 43123 / DSM 2839 / NBRC 102507 / CH34) (Ralstonia metallidurans).